The following is a 342-amino-acid chain: Transmembrane protein 59-like (342 aa).

Positions 1–24 (MAAVALMPPPLLLLLLLASPPAAS) are cleaved as a signal peptide. N-linked (GlcNAc...) asparagine glycosylation occurs at Asn97. Residues 268–290 (WILACCLFLSVLVMLWLSCSTLV) traverse the membrane as a helical segment. A Microbody targeting signal motif is present at residues 340-342 (TKL).

This sequence belongs to the TMEM59 family. Expressed preferentially at high level in the brain.

The protein resides in the golgi apparatus membrane. Functionally, modulates the O-glycosylation and complex N-glycosylation steps occurring during the Golgi maturation of APP. Inhibits APP transport to the cell surface and further shedding. The sequence is that of Transmembrane protein 59-like (TMEM59L) from Homo sapiens (Human).